We begin with the raw amino-acid sequence, 1211 residues long: Periplasmic acid trehalase ATC1 (1211 aa).

The Cytoplasmic portion of the chain corresponds to 1–46 (MKRIRSLWFNAEASYSNLNNSPSLRNKNSTGNNSRSKNYRSFSRFD). A helical membrane pass occupies residues 47–67 (LINSILLLMMLFLLAIFVTAL). The Periplasmic portion of the chain corresponds to 68-1211 (YLTKSSRLTY…ATIKEIVLND (1144 aa)). Residues 70-131 (TKSSRLTYSH…NTAYYDDENM (62 aa)) are required for cell surface targeting. N-linked (GlcNAc...) asparagine glycans are attached at residues asparagine 98, asparagine 207, asparagine 238, asparagine 247, asparagine 255, asparagine 259, asparagine 325, asparagine 370, asparagine 376, and asparagine 488. Position 513-514 (513-514 (WD)) interacts with substrate. N-linked (GlcNAc...) asparagine glycosylation is found at asparagine 539, asparagine 568, asparagine 628, and asparagine 638. Glutamate 644 functions as the Proton donor in the catalytic mechanism. N-linked (GlcNAc...) asparagine glycans are attached at residues asparagine 696 and asparagine 705. 711–712 (KQ) provides a ligand contact to substrate. N-linked (GlcNAc...) asparagine glycosylation is found at asparagine 879, asparagine 897, asparagine 910, asparagine 972, asparagine 990, asparagine 1031, asparagine 1049, asparagine 1064, asparagine 1147, and asparagine 1157.

It belongs to the glycosyl hydrolase 65 family. Glycosylated.

Its subcellular location is the membrane. The protein resides in the vacuole lumen. It is found in the periplasm. It carries out the reaction alpha,alpha-trehalose + H2O = alpha-D-glucose + beta-D-glucose. Functionally, periplasmic acid trehalase that catalyzes hydrolysis of the disaccharide trehalose and required for growth on trehalose as carbon source. Growth on trehalose is strictly respiratory. In Saccharomyces cerevisiae (strain CEN.PK113-7D) (Baker's yeast), this protein is Periplasmic acid trehalase ATC1.